Here is a 241-residue protein sequence, read N- to C-terminus: MASSSSSSYRFQSGSYPLSSSPSLGNFVERIKDACHFLVSAVLGTIISAILTFFFALVGTLLGALTGALIGQETESGFIRGAAIGAISGAVFSIEVFESSLDLWKSDESGFGCFLYLIDVIVSLLSGRLVRERIGPAMLSAVQSQMGAVDTAFDDHTSLFDTGGSKGLTGDLVEKIPKMTITGNNNTDASENTDSCSVCLQDFQLGETVRSLPHCHHMFHLPCIDNWLLRHGSCPMCRRDI.

The disordered stretch occupies residues 1 to 20; it reads MASSSSSSYRFQSGSYPLSS. Topologically, residues 1 to 36 are lumenal, thylakoid; it reads MASSSSSSYRFQSGSYPLSSSPSLGNFVERIKDACH. Residues 37 to 57 traverse the membrane as a helical segment; that stretch reads FLVSAVLGTIISAILTFFFAL. The Stromal portion of the chain corresponds to 58–76; the sequence is VGTLLGALTGALIGQETES. A helical membrane pass occupies residues 77–97; it reads GFIRGAAIGAISGAVFSIEVF. Topologically, residues 98-109 are lumenal, thylakoid; sequence ESSLDLWKSDES. The chain crosses the membrane as a helical span at residues 110-130; that stretch reads GFGCFLYLIDVIVSLLSGRLV. Topologically, residues 131 to 241 are stromal; it reads RERIGPAMLS…GSCPMCRRDI (111 aa). The segment at 196-238 adopts an RING-type; atypical zinc-finger fold; that stretch reads CSVCLQDFQLGETVRSLPHCHHMFHLPCIDNWLLRHGSCPMCR.

The protein belongs to the RING-type zinc finger family. NIP subfamily. As to quaternary structure, interacts with RPOT2.

The protein resides in the plastid. The protein localises to the chloroplast thylakoid membrane. Its function is as follows. Intrinsic thylakoid membrane protein that fixes RPOT2 on the stromal side of the thylakoid membrane. The sequence is that of NEP1-interacting protein 2 (NIP2) from Arabidopsis thaliana (Mouse-ear cress).